We begin with the raw amino-acid sequence, 343 residues long: UDP-N-acetylglucosamine--N-acetylmuramyl-(pentapeptide) pyrophosphoryl-undecaprenol N-acetylglucosamine transferase (343 aa).

UDP-N-acetyl-alpha-D-glucosamine is bound by residues 10–12 (TGG), Asn-113, Ser-174, and Gln-275.

Belongs to the glycosyltransferase 28 family. MurG subfamily.

The protein localises to the cell membrane. It catalyses the reaction di-trans,octa-cis-undecaprenyl diphospho-N-acetyl-alpha-D-muramoyl-L-alanyl-D-glutamyl-meso-2,6-diaminopimeloyl-D-alanyl-D-alanine + UDP-N-acetyl-alpha-D-glucosamine = di-trans,octa-cis-undecaprenyl diphospho-[N-acetyl-alpha-D-glucosaminyl-(1-&gt;4)]-N-acetyl-alpha-D-muramoyl-L-alanyl-D-glutamyl-meso-2,6-diaminopimeloyl-D-alanyl-D-alanine + UDP + H(+). Its pathway is cell wall biogenesis; peptidoglycan biosynthesis. Functionally, cell wall formation. Catalyzes the transfer of a GlcNAc subunit on undecaprenyl-pyrophosphoryl-MurNAc-pentapeptide (lipid intermediate I) to form undecaprenyl-pyrophosphoryl-MurNAc-(pentapeptide)GlcNAc (lipid intermediate II). This Wolbachia sp. subsp. Brugia malayi (strain TRS) protein is UDP-N-acetylglucosamine--N-acetylmuramyl-(pentapeptide) pyrophosphoryl-undecaprenol N-acetylglucosamine transferase.